The chain runs to 210 residues: MELQLAIDLLNKEEAAELAKKVEEYVDIVEIGTPIVINEGLPAVQHLDENISNAKVLADLKIMDAADYEVSQAIKFGADVVTILGVAEDASIKAAVEEAHKHDKQLLVDMIAVQDLEKRAKELDEMGADYIAVHTGYDLQAEGQSPLDSLRTVKSVIKNSKVAVAGGIKPDTIKDIVAEQPDLVIVGGGIANADDPVEAAKQCRDAIEGK.

The protein belongs to the HPS/KGPDC family. HPS subfamily.

The catalysed reaction is D-ribulose 5-phosphate + formaldehyde = D-arabino-hex-3-ulose 6-phosphate. It functions in the pathway one-carbon metabolism; formaldehyde assimilation via RuMP pathway; D-fructose 6-phosphate from D-ribulose 5-phosphate and formaldehyde: step 1/2. Functionally, catalyzes the condensation of ribulose 5-phosphate with formaldehyde to form 3-hexulose 6-phosphate. The chain is 3-hexulose-6-phosphate synthase from Staphylococcus haemolyticus (strain JCSC1435).